Reading from the N-terminus, the 100-residue chain is RxLR effector protein SFI8 (100 aa).

The first 22 residues, 1 to 22 (MRSILYAVLAFAVLARSSAVAA), serve as a signal peptide directing secretion. Positions 43–57 (RSLRVEAQEVIQSGR) match the RxLR-dEER motif. Positions 78–82 (KPDIK) match the Calmodulin-binding motif motif.

It belongs to the RxLR effector family. Interacts with the host calmodulin.

The protein resides in the secreted. It localises to the host nucleus. It is found in the host cytoplasm. Functionally, effector that suppresses flg22-induced post-translational MAP kinase activation both tomato and Arabidopsis. The perception of highly conserved pathogen- or microbe-associated molecular patterns (PAMPs/MAMPs), such as flg22, triggers converging signaling pathways recruiting MAP kinase cascades and inducing transcriptional re-programming, yielding a generic antimicrobial response. Associates with calmodulin to interfere with plant defense-associated calcium signaling in hosts. This is RxLR effector protein SFI8 from Phytophthora infestans (strain T30-4) (Potato late blight agent).